A 96-amino-acid chain; its full sequence is Putative defensin-like protein 236 (96 aa).

Residues 1 to 23 (MKNATSLIIYCFLMFLLMNNVKG) form the signal peptide. 4 cysteine pairs are disulfide-bonded: cysteine 31–cysteine 93, cysteine 41–cysteine 70, cysteine 49–cysteine 83, and cysteine 68–cysteine 85.

It belongs to the DEFL family.

It localises to the secreted. This Arabidopsis thaliana (Mouse-ear cress) protein is Putative defensin-like protein 236 (SCRL20).